Here is a 407-residue protein sequence, read N- to C-terminus: Transcriptional regulator alnR (407 aa).

A DNA-binding region (zn(2)-C6 fungal-type) is located at residues 23–53 (SCDTCQEAKVKCSQHKPSCHRCLRHRQPCVY). The tract at residues 53–85 (YSPQRRSGRPPKRPSPSSRLGPESNNSGDDIHN) is disordered. Over residues 75-85 (ESNNSGDDIHN) the composition is skewed to polar residues.

The protein localises to the nucleus. Its function is as follows. Transcriptional regulator involved in the positive regulation of the expression of the gene cluster that mediates the biosynthesis of asperlin, a polyketide showing anti-inflammatory, antitumor and antibiotic activities. This Emericella nidulans (strain FGSC A4 / ATCC 38163 / CBS 112.46 / NRRL 194 / M139) (Aspergillus nidulans) protein is Transcriptional regulator alnR.